The following is a 327-amino-acid chain: uncharacterized protein (327 aa).

A signal peptide spans 1–24 (MAMACLCLANISWATVCANSTGVA).

The protein belongs to the fimbrial protein family.

Its subcellular location is the fimbrium. Its function is as follows. Part of the sfmACDHF fimbrial operon. Could contribute to adhesion to various surfaces in specific environmental niches. Increases adhesion to eukaryotic T24 bladder epithelial cells in the absence of fim genes. This is an uncharacterized protein from Escherichia coli (strain K12).